We begin with the raw amino-acid sequence, 1297 residues long: Probable bifunctional E2/E3 enzyme R795 (1297 aa).

The RING-type; atypical zinc finger occupies C74–N128. Positions E678–I750 constitute a U-box domain. One can recognise a VWFA domain in the interval E899–I1082. One can recognise a UBC core domain in the interval Q1133–L1279. The Glycyl thioester intermediate role is filled by C1217.

In the C-terminal section; belongs to the ubiquitin-conjugating enzyme family.

The catalysed reaction is S-ubiquitinyl-[E2 ubiquitin-conjugating enzyme]-L-cysteine + [acceptor protein]-L-lysine = [E2 ubiquitin-conjugating enzyme]-L-cysteine + N(6)-ubiquitinyl-[acceptor protein]-L-lysine.. It carries out the reaction S-ubiquitinyl-[E1 ubiquitin-activating enzyme]-L-cysteine + [E2 ubiquitin-conjugating enzyme]-L-cysteine = [E1 ubiquitin-activating enzyme]-L-cysteine + S-ubiquitinyl-[E2 ubiquitin-conjugating enzyme]-L-cysteine.. The protein operates within protein modification; protein ubiquitination. In terms of biological role, catalyzes the covalent attachment of ubiquitin to other proteins. Also acts as an E3 ubiquitin-protein ligase. The polypeptide is Probable bifunctional E2/E3 enzyme R795 (Acanthamoeba polyphaga (Amoeba)).